We begin with the raw amino-acid sequence, 417 residues long: MAEIKNYTLNFGPQHPAAHGVLRLVLELDGEVIQRADPHIGLLHRATEKLAENKTFIQSVPYMDRLDYVSMMVNEHGYVLAIERLLGIDVPERAQYIRVLFDEITRVLNHLMWIGAHALDVGAMAVFLYAFREREDLMDVYEAVSGARMHAAYYRPGGVYRDLPDAMPQFKASKIRNEKALAKMNEARSGSVLDFIDDFFTRFPKCIDEYETLLTDNRIWKQRLVGIGVVSPERALQMGLTGPMLRGSGIAWDLRKKQPYEVYDRMDFDVPVGVNGDCYDRYLVRVEEMRQSVRIAKQCIEWLRKNQGPVMTDNHKVAPPSRVGMKTNMEDLIHHFKLFTEGFHVPEGEAYAAVEHPKGEFGIYLVSDGANKPYRLKIRAPGFAHLASLDEMARGHMIADAVTIIGTQDIVFGEIDR.

This sequence belongs to the complex I 49 kDa subunit family. In terms of assembly, NDH-1 is composed of 14 different subunits. Subunits NuoB, C, D, E, F, and G constitute the peripheral sector of the complex.

It localises to the cell inner membrane. It carries out the reaction a quinone + NADH + 5 H(+)(in) = a quinol + NAD(+) + 4 H(+)(out). In terms of biological role, NDH-1 shuttles electrons from NADH, via FMN and iron-sulfur (Fe-S) centers, to quinones in the respiratory chain. The immediate electron acceptor for the enzyme in this species is believed to be ubiquinone. Couples the redox reaction to proton translocation (for every two electrons transferred, four hydrogen ions are translocated across the cytoplasmic membrane), and thus conserves the redox energy in a proton gradient. This is NADH-quinone oxidoreductase subunit D from Burkholderia vietnamiensis (strain G4 / LMG 22486) (Burkholderia cepacia (strain R1808)).